The chain runs to 712 residues: Probable metal-nicotianamine transporter YSL11 (712 aa).

Positions 25–48 (RRNTTAAARGNAGEEEEEAEAVAP) are disordered. A run of 14 helical transmembrane segments spans residues 70–90 (AFVV…KLSL), 93–113 (GVIP…VRLW), 138–158 (CVVS…LFGM), 180–200 (LGWI…ALVP), 242–262 (LGKY…YTAG), 300–320 (IVNV…WPLI), 345–365 (VFIT…KVFG), 418–438 (VAIG…PLII), 446–466 (ILIA…GSGL), 478–498 (LAIF…LVGL), 532–552 (FVSQ…VFWL), 593–613 (LTLC…KDLV), 631–651 (FYLG…LYFW), and 666–686 (VASG…VLSL).

It belongs to the YSL (TC 2.A.67.2) family.

The protein resides in the membrane. In terms of biological role, may be involved in the transport of nicotianamine-chelated metals. In Oryza sativa subsp. japonica (Rice), this protein is Probable metal-nicotianamine transporter YSL11 (YSL11).